Reading from the N-terminus, the 1203-residue chain is uncharacterized protein (1203 aa).

This is an uncharacterized protein from Magallana gigas (Pacific oyster).